The following is a 693-amino-acid chain: Putative adenosylcobalamin-dependent ribonucleoside-triphosphate reductase (693 aa).

Residues Cys90 and Cys386 are joined by a disulfide bond. Catalysis depends on residues Cys375 and Glu377.

Belongs to the class II ribonucleoside-triphosphate reductase family. Requires adenosylcob(III)alamin as cofactor.

It catalyses the reaction a 2'-deoxyribonucleoside 5'-triphosphate + [thioredoxin]-disulfide + H2O = a ribonucleoside 5'-triphosphate + [thioredoxin]-dithiol. The protein is Putative adenosylcobalamin-dependent ribonucleoside-triphosphate reductase (50) of Mycobacterium phage D29 (Mycobacteriophage D29).